The chain runs to 219 residues: Dehydration-responsive element-binding protein 1F (219 aa).

The tract at residues 1–45 (MDTEDTSSASSSSVSPPSSPGGGHHHRLPPKRRAGRKKFRETRHP) is disordered. Positions 7–16 (SSASSSSVSP) are enriched in low complexity. Residues 23 to 41 (GHHHRLPPKRRAGRKKFRE) are compositionally biased toward basic residues. A DNA-binding region (AP2/ERF) is located at residues 46–105 (VYRGVRARAGGSRWVCEVREPQAQARIWLGTYPTPEMAARAHDVAAIALRGERGAELNFP). The segment at 134 to 161 (RRPPPPLALPEDPQEGTSGGGATATSGR) is disordered.

This sequence belongs to the AP2/ERF transcription factor family. ERF subfamily. Mostly expressed in developing seeds and apices.

The protein localises to the nucleus. Transcriptional activator that binds specifically to the DNA sequence 5'-[AG]CCGAC-3'. Binding to the C-repeat/DRE element mediates high salinity- and dehydration-inducible transcription. The polypeptide is Dehydration-responsive element-binding protein 1F (DREB1F) (Oryza sativa subsp. indica (Rice)).